The following is a 203-amino-acid chain: MSSKEQNVHEEQVSKEKEGMESVMNESQEQVKSEDAQAEFDAQAELVQALARVDELEKQLQQSQKTEREAMIRAQAEIENIRRRTQQDVEKAHKFALEKFSNELLPVLDNLERALSAADHENEQMQPMIEGLELTLKSFLDAVRKFGIEVVEEKNVAFNPEVHQAMTLIDSPEHEANHVVDVMQKGYTLNGRLLRPAMVVVSK.

Basic and acidic residues predominate over residues 1 to 20 (MSSKEQNVHEEQVSKEKEGM). The disordered stretch occupies residues 1–38 (MSSKEQNVHEEQVSKEKEGMESVMNESQEQVKSEDAQA).

It belongs to the GrpE family. In terms of assembly, homodimer.

It localises to the cytoplasm. In terms of biological role, participates actively in the response to hyperosmotic and heat shock by preventing the aggregation of stress-denatured proteins, in association with DnaK and GrpE. It is the nucleotide exchange factor for DnaK and may function as a thermosensor. Unfolded proteins bind initially to DnaJ; upon interaction with the DnaJ-bound protein, DnaK hydrolyzes its bound ATP, resulting in the formation of a stable complex. GrpE releases ADP from DnaK; ATP binding to DnaK triggers the release of the substrate protein, thus completing the reaction cycle. Several rounds of ATP-dependent interactions between DnaJ, DnaK and GrpE are required for fully efficient folding. This Proteus mirabilis (strain HI4320) protein is Protein GrpE.